The primary structure comprises 380 residues: Putative 8-amino-7-oxononanoate synthase (380 aa).

R18 contributes to the substrate binding site. A pyridoxal 5'-phosphate-binding site is contributed by 106–107 (GY). H131 is a binding site for substrate. Pyridoxal 5'-phosphate is bound by residues S179, 205-208 (DEAH), and 236-239 (TFGK). N6-(pyridoxal phosphate)lysine is present on K239. T352 lines the substrate pocket.

Belongs to the class-II pyridoxal-phosphate-dependent aminotransferase family. BioF subfamily. As to quaternary structure, homodimer. Pyridoxal 5'-phosphate serves as cofactor.

The catalysed reaction is 6-carboxyhexanoyl-[ACP] + L-alanine + H(+) = (8S)-8-amino-7-oxononanoate + holo-[ACP] + CO2. It participates in cofactor biosynthesis; biotin biosynthesis. Catalyzes the decarboxylative condensation of pimeloyl-[acyl-carrier protein] and L-alanine to produce 8-amino-7-oxononanoate (AON), [acyl-carrier protein], and carbon dioxide. The chain is Putative 8-amino-7-oxononanoate synthase (bioF) from Neisseria meningitidis serogroup C / serotype 2a (strain ATCC 700532 / DSM 15464 / FAM18).